Consider the following 227-residue polypeptide: UPF0758 protein Rxyl_1530 (227 aa).

An MPN domain is found at 106 to 227 (VISSPADVDG…YFSMKEHGML (122 aa)). Zn(2+)-binding residues include His177, His179, and Asp190. The JAMM motif signature appears at 177–190 (HNHPSGRVEPSRED).

Belongs to the UPF0758 family.

The chain is UPF0758 protein Rxyl_1530 from Rubrobacter xylanophilus (strain DSM 9941 / JCM 11954 / NBRC 16129 / PRD-1).